The chain runs to 212 residues: Adenylate kinase (212 aa).

10–15 (GAGKGT) is an ATP binding site. The interval 30–59 (AIGDIFRAIIKTSSKDAEVINSYVEQGKLI) is NMP. Residues arginine 36, 57-59 (KLI), 85-88 (GYPR), and glutamine 92 contribute to the AMP site. The interval 122 to 160 (GRYSCKSCGKIYNDYFLKPRIDKICDVCKSSVFEYRKDD) is LID. Arginine 123 serves as a coordination point for ATP. The Zn(2+) site is built by cysteine 126 and cysteine 129. 132–133 (IY) serves as a coordination point for ATP. The Zn(2+) site is built by cysteine 146 and cysteine 149. Residues arginine 157 and arginine 168 each coordinate AMP. Lysine 196 contributes to the ATP binding site.

This sequence belongs to the adenylate kinase family. In terms of assembly, monomer.

Its subcellular location is the cytoplasm. It catalyses the reaction AMP + ATP = 2 ADP. It participates in purine metabolism; AMP biosynthesis via salvage pathway; AMP from ADP: step 1/1. Catalyzes the reversible transfer of the terminal phosphate group between ATP and AMP. Plays an important role in cellular energy homeostasis and in adenine nucleotide metabolism. In Rickettsia bellii (strain RML369-C), this protein is Adenylate kinase.